Reading from the N-terminus, the 248-residue chain is 4-hydroxy-tetrahydrodipicolinate reductase (248 aa).

NAD(+) contacts are provided by residues 9–14, 77–79, and 104–107; these read GARGKV, GTT, and APNF. The active-site Proton donor/acceptor is the H134. H135 is a (S)-2,3,4,5-tetrahydrodipicolinate binding site. Residue K138 is the Proton donor of the active site. 144–145 contacts (S)-2,3,4,5-tetrahydrodipicolinate; sequence GT.

The protein belongs to the DapB family.

It localises to the cytoplasm. The catalysed reaction is (S)-2,3,4,5-tetrahydrodipicolinate + NAD(+) + H2O = (2S,4S)-4-hydroxy-2,3,4,5-tetrahydrodipicolinate + NADH + H(+). It catalyses the reaction (S)-2,3,4,5-tetrahydrodipicolinate + NADP(+) + H2O = (2S,4S)-4-hydroxy-2,3,4,5-tetrahydrodipicolinate + NADPH + H(+). It functions in the pathway amino-acid biosynthesis; L-lysine biosynthesis via DAP pathway; (S)-tetrahydrodipicolinate from L-aspartate: step 4/4. Catalyzes the conversion of 4-hydroxy-tetrahydrodipicolinate (HTPA) to tetrahydrodipicolinate. The chain is 4-hydroxy-tetrahydrodipicolinate reductase from Nocardia farcinica (strain IFM 10152).